A 401-amino-acid polypeptide reads, in one-letter code: Aspartokinase (401 aa).

Belongs to the aspartokinase family.

It catalyses the reaction L-aspartate + ATP = 4-phospho-L-aspartate + ADP. It functions in the pathway amino-acid biosynthesis; L-lysine biosynthesis via DAP pathway; (S)-tetrahydrodipicolinate from L-aspartate: step 1/4. Its pathway is amino-acid biosynthesis; L-methionine biosynthesis via de novo pathway; L-homoserine from L-aspartate: step 1/3. It participates in amino-acid biosynthesis; L-threonine biosynthesis; L-threonine from L-aspartate: step 1/5. This is Aspartokinase (lysC) from Rickettsia conorii (strain ATCC VR-613 / Malish 7).